A 129-amino-acid chain; its full sequence is MLDYCLVVTGPAYGTQQASSAYQFAQALLAKGHRLSSVFFYREGVLNANQLTAPAGDEFDLVRGWVQLARQHGIELNVCVAAALRRGVTDEQEAAQQGLPAANLQPGFILSGLGSLAEAALSSDRLVQF.

The active-site Cysteine persulfide intermediate is the cysteine 79.

This sequence belongs to the DsrE/TusD family. As to quaternary structure, heterohexamer, formed by a dimer of trimers. The hexameric TusBCD complex contains 2 copies each of TusB, TusC and TusD. The TusBCD complex interacts with TusE.

It localises to the cytoplasm. Its function is as follows. Part of a sulfur-relay system required for 2-thiolation of 5-methylaminomethyl-2-thiouridine (mnm(5)s(2)U) at tRNA wobble positions. Accepts sulfur from TusA and transfers it in turn to TusE. This Serratia proteamaculans (strain 568) protein is Sulfurtransferase TusD.